Here is a 377-residue protein sequence, read N- to C-terminus: MDGTEIAVSPRSLHSELMCPICLDMLKNTMTTKECLHRFCSDCIVTALRSGNKECPTCRKKLVSKRSLRPDPNFDALISKIYPSREEYEAHQDRVLIRLSRLHNQQALSSSIEEGLRMQAMHRAQRVRRPIPGSDQTTTMSGGEGEPGEGEGDGEDVSSDSAPDSAPGPAPKRPRGGGAGGSSVGTGGGGTGGVGGGAGSEDSGDRGGTLGGGTLGPPSPPGAPSPPEPGGEIELVFRPHPLLVEKGEYCQTRYVKTTGNATVDHLSKYLALRIALERRQQQEAGEPGGPGGGASDTGGPDGGGGEGGGAGGGDGPEEPALPSLEGVSEKQYTIYIAPGGGAFTTLNGSLTLELVNEKFWKVSRPLELCYAPTKDPK.

The tract at residues 1-205 is necessary for transcriptional repression; sequence MDGTEIAVSP…GGAGSEDSGD (205 aa). Ser9 is subject to Phosphoserine. An RING-type zinc finger spans residues 19–59; the sequence is CPICLDMLKNTMTTKECLHRFCSDCIVTALRSGNKECPTCR. Phosphoserine occurs at positions 111, 158, and 161. 2 disordered regions span residues 119-234 and 280-325; these read QAMH…GEIE and QQQE…PSLE. Residues 146 to 158 show a composition bias toward acidic residues; the sequence is EPGEGEGDGEDVS. The Nuclear localization signal motif lies at 172-175; the sequence is KRPR. The span at 176–199 shows a compositional bias: gly residues; the sequence is GGGAGGSSVGTGGGGTGGVGGGAG. Residues Thr186 and Thr191 each carry the phosphothreonine modification. A phosphoserine mark is found at Ser200 and Ser203. Positions 201–377 are necessary for interaction with CBX2; that stretch reads EDSGDRGGTL…LCYAPTKDPK (177 aa). Residues 206–215 show a composition bias toward gly residues; it reads RGGTLGGGTL. Pro residues predominate over residues 217 to 229; it reads PPSPPGAPSPPEP. Phosphoserine is present on residues Ser219 and Ser225. Residues 286-314 are compositionally biased toward gly residues; that stretch reads EPGGPGGGASDTGGPDGGGGEGGGAGGGD.

Component of chromatin-associated Polycomb (PcG) complexes. Part of the E2F6.com-1 complex in G0 phase composed of E2F6, MGA, MAX, TFDP1, CBX3, BAT8, EUHMTASE1, RING1, RNF2/RING2 MBLR, L3MBTL2 and YAF2. Interacts with CBX2 and PCGF6. Component of a PRC1-like complex. Component of repressive BCOR complex containing Polycomb group subcomplex at least composed of RYBP, PCGF1, BCOR and RNF2/RING2. Interacts with PHC2, PCGF2, RNF2; CBX6, CBX7 and CBX8. Interacts with BMI1. Interacts with MN1.

It is found in the nucleus speckle. The enzyme catalyses S-ubiquitinyl-[E2 ubiquitin-conjugating enzyme]-L-cysteine + [acceptor protein]-L-lysine = [E2 ubiquitin-conjugating enzyme]-L-cysteine + N(6)-ubiquitinyl-[acceptor protein]-L-lysine.. Its pathway is protein modification; protein ubiquitination. Constitutes one of the E3 ubiquitin-protein ligases that mediate monoubiquitination of 'Lys-119' of histone H2A, thereby playing a central role in histone code and gene regulation. H2A 'Lys-119' ubiquitination gives a specific tag for epigenetic transcriptional repression and participates in X chromosome inactivation of female mammals. Essential component of a Polycomb group (PcG) multiprotein PRC1-like complex, a complex class required to maintain the transcriptionally repressive state of many genes, including Hox genes, throughout development. PcG PRC1 complex acts via chromatin remodeling and modification of histones, rendering chromatin heritably changed in its expressibility. Compared to RNF2/RING2, it does not have the main E3 ubiquitin ligase activity on histone H2A, and it may rather act as a modulator of RNF2/RING2 activity. In Macaca mulatta (Rhesus macaque), this protein is E3 ubiquitin-protein ligase RING1 (RING1).